Here is a 390-residue protein sequence, read N- to C-terminus: Lissencephaly-1 homolog (390 aa).

A LisH domain is found at 7–39; the sequence is QREEINRAVAEYLQNNGYSEAFNMLLKEASLSE. The stretch at 54-80 forms a coiled coil; that stretch reads TTVLRLQRKVNDLEAKLLESQQEINHG. WD repeat units follow at residues 104-145, 146-185, 189-228, 231-270, 272-313, 316-355, and 358-390; these read GHRL…KTLK, GHTD…DCLK, GHEH…CVFT, GHND…RNWY, EIMS…VIFT, AHEN…CMKA, and AHEH…WECR.

Belongs to the WD repeat LIS1/nudF family.

It localises to the cytoplasm. Its subcellular location is the cytoskeleton. The protein resides in the microtubule organizing center. The protein localises to the centrosome. Its function is as follows. Positively regulates the activity of the minus-end directed microtubule motor protein dynein. May enhance dynein-mediated microtubule sliding by targeting dynein to the microtubule plus end. Required for several dynein- and microtubule-dependent processes. The chain is Lissencephaly-1 homolog from Caenorhabditis briggsae.